We begin with the raw amino-acid sequence, 337 residues long: MKKSLIALTLAALPVAAMADVTLYGTIKAGVETYRTVKHTDGKVTEVKTGSEIADFGSKIGFKGQEDFGNGLKAIWQLEQSASIAGTNSGWGNKQSFIGLKGGFGTVRAGNLNSILKSTGDNVNAWESGKATEDVLQVSKISAPEHRYASVRYDSPEFAGFSGSVQYAPKDNSGANGESYHVGLNYQNSGFFAQYAGLFQRHGEGTKATVGEPVEKLQVHRLVGGYDNDALYASVAVQQQDAKLAAAPNSHNSQTEVAATVAYRFGNVTPRVSYAHGFKGTVAKADGDNRYDQVVVGAEYDFSKRTSALVSAGWLQEGKGAGKTVSTASTVGLRHKF.

A signal peptide spans Met-1 to Ala-19.

This sequence belongs to the Gram-negative porin family. In terms of assembly, homotrimer.

It is found in the cell outer membrane. Functionally, serves as a slightly cation selective porin. This chain is Major outer membrane protein P.IB (por), found in Neisseria lactamica.